The chain runs to 71 residues: Ceratotoxin-A (71 aa).

A signal peptide spans 1-23 (MANLKAVFLICIVAFIALQCVVA). Propeptides lie at residues 24 to 35 (EPAAEDSVVVKR) and 65 to 71 (VAAGLVG).

Homomer of four to six subunits.

It localises to the secreted. Its function is as follows. Female-specific peptides with potent activity against Gram-positive and Gram-negative bacteria. They have as well hemolytic activity. This chain is Ceratotoxin-A (CTXA1), found in Ceratitis capitata (Mediterranean fruit fly).